The chain runs to 187 residues: Acireductone dioxygenase (187 aa).

Residues H90, H92, E96, and H135 each coordinate Fe(2+). 4 residues coordinate Ni(2+): H90, H92, E96, and H135.

This sequence belongs to the acireductone dioxygenase (ARD) family. Fe(2+) serves as cofactor. The cofactor is Ni(2+).

Its subcellular location is the cytoplasm. The protein resides in the nucleus. The catalysed reaction is 1,2-dihydroxy-5-(methylsulfanyl)pent-1-en-3-one + O2 = 4-methylsulfanyl-2-oxobutanoate + formate + 2 H(+). It catalyses the reaction 1,2-dihydroxy-5-(methylsulfanyl)pent-1-en-3-one + O2 = 3-(methylsulfanyl)propanoate + CO + formate + 2 H(+). It participates in amino-acid biosynthesis; L-methionine biosynthesis via salvage pathway; L-methionine from S-methyl-5-thio-alpha-D-ribose 1-phosphate: step 5/6. Functionally, catalyzes 2 different reactions between oxygen and the acireductone 1,2-dihydroxy-3-keto-5-methylthiopentene (DHK-MTPene) depending upon the metal bound in the active site. Fe-containing acireductone dioxygenase (Fe-ARD) produces formate and 2-keto-4-methylthiobutyrate (KMTB), the alpha-ketoacid precursor of methionine in the methionine recycle pathway. Ni-containing acireductone dioxygenase (Ni-ARD) produces methylthiopropionate, carbon monoxide and formate, and does not lie on the methionine recycle pathway. The chain is Acireductone dioxygenase from Drosophila pseudoobscura pseudoobscura (Fruit fly).